The primary structure comprises 162 residues: Epoxidase pydX (162 aa).

Residues 1–26 form the signal peptide; the sequence is MSLIALPLRLLRLLPAITSTWVLAFA. Transmembrane regions (helical) follow at residues 62 to 82 and 89 to 109; these read WILIVVYPINYALGVVNLFVG and TGAMSWYTIGLLFSLAHMGYM. 2 N-linked (GlcNAc...) asparagine glycosylation sites follow: asparagine 127 and asparagine 139.

The protein belongs to the epoxidase xenD family.

The protein localises to the membrane. Its pathway is mycotoxin biosynthesis. Epoxidase; part of the gene cluster that mediates the biosynthesis of pyrrocidines, fungal natural products containing a macrocyclic para-cyclophane connected to a decahydrofluorene ring system that show potent antibiotic activities toward Gram-negative bacteria. Within the pathway, pydX functions synergistically with pydB, pydE and pydZ to form the cyclophane. The pathway begins with the PKS-NRPS pydA which, with the help of the trans-enoyl reductase pydC, synthesizes the polyketide-tyrosyl acyl thioester product which can be reductively off-loaded by the terminal reductase (R) domain in pydA. The alpha/beta hydrolase pydG is then required to catalyze the subsequent Knoevenagel condensation that affords the 3-pyrrolin-2-one ring, whereas the four proteins pydB, pydE, pydX and pydZ then function synergistically to form the cyclophane. PydB and the membrane-bound pydX and pydZ are lipid-binding proteins that can sequester and mold the pdyG product into the inverse S-shape. Binding of the medium chain reductase pydE to the complex would trigger the cascade oxidative cyclization. PydY is involved in the Diels-Alder cycloaddition that forms the decahydrofluorene core. Additional non-enzymatic hydroxylation yields pyrrocidine A2 which can be further reduced into pyrrocidine B by an endogenous reductase. The protein is Epoxidase pydX of Acremonium sp.